A 223-amino-acid polypeptide reads, in one-letter code: MTSNQLAQYIDHTALTAEKNEQDISTLCNEAIEHGFYSVCINSAYIPLAKEKLAGSNVKICTVVGFPLGANLTSVKAFETQESIKAGANEIDMVINVGWIKSQKWDEVKQDIQAVFNACNGTPLKVILETCLLTKDEIVKACEICKEIGVAFVKTSTGFNKGGATVEDVALMKNTVGNIGVKASGGVRDTETALAMIKAGATRIGASAGIAIISGTQDTQSTY.

Catalysis depends on D92, which acts as the Proton donor/acceptor. The active-site Schiff-base intermediate with acetaldehyde is the K154. Residue K182 is the Proton donor/acceptor of the active site.

This sequence belongs to the DeoC/FbaB aldolase family. DeoC type 1 subfamily.

It is found in the cytoplasm. It carries out the reaction 2-deoxy-D-ribose 5-phosphate = D-glyceraldehyde 3-phosphate + acetaldehyde. It participates in carbohydrate degradation; 2-deoxy-D-ribose 1-phosphate degradation; D-glyceraldehyde 3-phosphate and acetaldehyde from 2-deoxy-alpha-D-ribose 1-phosphate: step 2/2. Catalyzes a reversible aldol reaction between acetaldehyde and D-glyceraldehyde 3-phosphate to generate 2-deoxy-D-ribose 5-phosphate. This chain is Deoxyribose-phosphate aldolase, found in Haemophilus influenzae (strain ATCC 51907 / DSM 11121 / KW20 / Rd).